A 1496-amino-acid polypeptide reads, in one-letter code: Chromosome partition protein MukB (1496 aa).

Residue 63 to 70 (GGNGAGKS) coordinates ATP. Coiled coils occupy residues 328-493 (KLEL…QRLS), 536-632 (KMQA…APAW), 808-832 (RAAR…HAER), 861-1171 (NPEE…SAEE), and 1235-1291 (IDAI…LQNI). The tract at residues 694 to 811 (PDGSDDVRLN…EVPLFGRAAR (118 aa)) is flexible hinge. Residues 1082–1091 (RARSRRDELQ) show a composition bias toward basic and acidic residues. A disordered region spans residues 1082–1101 (RARSRRDELQQRLSQQRSRK).

This sequence belongs to the SMC family. MukB subfamily. Homodimerization via its hinge domain. Binds to DNA via its C-terminal region. Interacts, and probably forms a ternary complex, with MukE and MukF via its C-terminal region. The complex formation is stimulated by calcium or magnesium. Interacts with tubulin-related protein FtsZ.

Its subcellular location is the cytoplasm. It is found in the nucleoid. In terms of biological role, plays a central role in chromosome condensation, segregation and cell cycle progression. Functions as a homodimer, which is essential for chromosome partition. Involved in negative DNA supercoiling in vivo, and by this means organize and compact chromosomes. May achieve or facilitate chromosome segregation by condensation DNA from both sides of a centrally located replisome during cell division. In Actinobacillus pleuropneumoniae serotype 5b (strain L20), this protein is Chromosome partition protein MukB.